Here is a 97-residue protein sequence, read N- to C-terminus: Aspartyl/glutamyl-tRNA(Asn/Gln) amidotransferase subunit C (97 aa).

It belongs to the GatC family. In terms of assembly, heterotrimer of A, B and C subunits.

It catalyses the reaction L-glutamyl-tRNA(Gln) + L-glutamine + ATP + H2O = L-glutaminyl-tRNA(Gln) + L-glutamate + ADP + phosphate + H(+). It carries out the reaction L-aspartyl-tRNA(Asn) + L-glutamine + ATP + H2O = L-asparaginyl-tRNA(Asn) + L-glutamate + ADP + phosphate + 2 H(+). In terms of biological role, allows the formation of correctly charged Asn-tRNA(Asn) or Gln-tRNA(Gln) through the transamidation of misacylated Asp-tRNA(Asn) or Glu-tRNA(Gln) in organisms which lack either or both of asparaginyl-tRNA or glutaminyl-tRNA synthetases. The reaction takes place in the presence of glutamine and ATP through an activated phospho-Asp-tRNA(Asn) or phospho-Glu-tRNA(Gln). In Synechococcus sp. (strain CC9902), this protein is Aspartyl/glutamyl-tRNA(Asn/Gln) amidotransferase subunit C.